Here is a 372-residue protein sequence, read N- to C-terminus: Protein phosphatase 1 regulatory subunit 42 (372 aa).

LRR repeat units lie at residues 30-51, 52-71, 72-93, 94-115, 116-137, 146-167, and 168-189; these read RITH…TMCR, NLTV…NLGS, NLTH…SGLK, RLEK…EGLR, ELRE…LFDP, SLSV…AVLE, and NLTQ…EFVL. The region spanning 203-241 is the LRRCT domain; it reads NPVCLKPKYREKVTIISKTLEILDGKEIKEMARQFLLNW.

It localises to the cytoplasm. The protein resides in the cytoskeleton. It is found in the microtubule organizing center. Its subcellular location is the centrosome. Functionally, may regulate phosphatase activity of protein phosphatase 1 (PP1) complexes. The sequence is that of Protein phosphatase 1 regulatory subunit 42 (ppp1r42) from Xenopus laevis (African clawed frog).